A 350-amino-acid chain; its full sequence is Nicotinate-nucleotide--dimethylbenzimidazole phosphoribosyltransferase (350 aa).

Residue Glu-316 is the Proton acceptor of the active site.

Belongs to the CobT family.

The catalysed reaction is 5,6-dimethylbenzimidazole + nicotinate beta-D-ribonucleotide = alpha-ribazole 5'-phosphate + nicotinate + H(+). The protein operates within nucleoside biosynthesis; alpha-ribazole biosynthesis; alpha-ribazole from 5,6-dimethylbenzimidazole: step 1/2. Catalyzes the synthesis of alpha-ribazole-5'-phosphate from nicotinate mononucleotide (NAMN) and 5,6-dimethylbenzimidazole (DMB). This Pseudomonas syringae pv. syringae (strain B728a) protein is Nicotinate-nucleotide--dimethylbenzimidazole phosphoribosyltransferase.